A 140-amino-acid chain; its full sequence is Regulator of ribonuclease activity B (140 aa).

Residues 115 to 140 (FEDPNAQDDDEDDGEAIDEDDNGIRH) are disordered. Acidic residues predominate over residues 119–140 (NAQDDDEDDGEAIDEDDNGIRH).

The protein belongs to the RraB family. In terms of assembly, interacts with the C-terminal region of Rne.

It localises to the cytoplasm. Globally modulates RNA abundance by binding to RNase E (Rne) and regulating its endonucleolytic activity. Can modulate Rne action in a substrate-dependent manner by altering the composition of the degradosome. In Pantoea ananatis (strain LMG 20103), this protein is Regulator of ribonuclease activity B.